Consider the following 210-residue polypeptide: A-kinase-interacting protein 1 (210 aa).

Disordered stretches follow at residues 58–80 (HLEK…ERPP) and 136–162 (QRKD…EASQ).

As to quaternary structure, interacts with PRKACA and RELA. Expressed at high levels in adult heart and at lower levels in brain, testis, ovary and skeletal muscle. Up-regulated in some breast cancer cell lines. Isoform 1 and isoform 3 are expressed in fetal brain.

The protein localises to the nucleus. In terms of biological role, enhances NF-kappa-B transcriptional activity by regulating the nuclear localization of the NF-kappa-B subunit RELA and promoting the phosphorylation of RELA by PRKACA. Regulates the effect of the cAMP-dependent protein kinase signaling pathway on the NF-kappa-B activation cascade. The protein is A-kinase-interacting protein 1 (AKIP1) of Homo sapiens (Human).